The chain runs to 328 residues: GTP 3',8-cyclase (328 aa).

The Radical SAM core domain maps to 1-229 (MNTVDYLRIS…ESFVPGNGPA (229 aa)). Arg8 contacts GTP. Residues Cys15 and Cys19 each contribute to the [4Fe-4S] cluster site. Tyr21 serves as a coordination point for S-adenosyl-L-methionine. [4Fe-4S] cluster is bound at residue Cys22. A GTP-binding site is contributed by Arg60. Gly64 serves as a coordination point for S-adenosyl-L-methionine. Thr91 provides a ligand contact to GTP. Ser115 contacts S-adenosyl-L-methionine. Position 155 (Lys155) interacts with GTP. Met189 contacts S-adenosyl-L-methionine. Cys252 and Cys255 together coordinate [4Fe-4S] cluster. 257–259 (RMR) lines the GTP pocket. [4Fe-4S] cluster is bound at residue Cys269.

Belongs to the radical SAM superfamily. MoaA family. As to quaternary structure, monomer and homodimer. Requires [4Fe-4S] cluster as cofactor.

It carries out the reaction GTP + AH2 + S-adenosyl-L-methionine = (8S)-3',8-cyclo-7,8-dihydroguanosine 5'-triphosphate + 5'-deoxyadenosine + L-methionine + A + H(+). It participates in cofactor biosynthesis; molybdopterin biosynthesis. Functionally, catalyzes the cyclization of GTP to (8S)-3',8-cyclo-7,8-dihydroguanosine 5'-triphosphate. This chain is GTP 3',8-cyclase, found in Trichodesmium erythraeum (strain IMS101).